Reading from the N-terminus, the 759-residue chain is Glucosylceramidase (759 aa).

E247 (proton donor) is an active-site residue. E497 (nucleophile) is an active-site residue. The tract at residues 576–600 (AFENESQRDPQSPAYSESQRNTESY) is disordered. The span at 584 to 599 (DPQSPAYSESQRNTES) shows a compositional bias: polar residues.

Belongs to the glycosyl hydrolase 5 (cellulase A) family.

It is found in the membrane. It catalyses the reaction a beta-D-glucosyl-(1&lt;-&gt;1')-N-acylsphing-4-enine + H2O = an N-acylsphing-4-enine + D-glucose. In terms of biological role, specifically hydrolyzes the glucosidic linkage in glucosylceramide. May prevent accumulation of aberrent glucosylceramide containing immature ceramide. This Aspergillus fumigatus (Neosartorya fumigata) protein is Glucosylceramidase.